The primary structure comprises 231 residues: Elongation factor 1-delta 1 (231 aa).

An N-acetylalanine modification is found at Ala2. Residues Asp10 to Gly73 enclose the GST C-terminal domain. Disordered stretches follow at residues Thr85 to Asp108 and Glu116 to Thr135. Positions Glu119–Ala129 are enriched in basic and acidic residues.

This sequence belongs to the EF-1-beta/EF-1-delta family. In terms of assembly, EF-1 is composed of 4 subunits: alpha, beta (1B-alpha=beta'), delta (1B-beta), and gamma (1B-gamma).

EF-1-beta and EF-1-delta stimulate the exchange of GDP bound to EF-1-alpha to GTP. This Arabidopsis thaliana (Mouse-ear cress) protein is Elongation factor 1-delta 1.